Consider the following 370-residue polypeptide: Biotin synthase (370 aa).

The 227-residue stretch at 50–276 (FSDGTVDACS…IAVYRFLHPE (227 aa)) folds into the Radical SAM core domain. 3 residues coordinate [4Fe-4S] cluster: C68, C72, and C75. C208 and R280 together coordinate [2Fe-2S] cluster. Positions 328–370 (AGLEPNREANTFDPESVKARHRSPAAETASNANRTNATTETDD) are disordered. The segment covering 352–370 (AAETASNANRTNATTETDD) has biased composition (low complexity).

This sequence belongs to the radical SAM superfamily. Biotin synthase family. As to quaternary structure, homodimer. It depends on [4Fe-4S] cluster as a cofactor. Requires [2Fe-2S] cluster as cofactor.

The enzyme catalyses (4R,5S)-dethiobiotin + (sulfur carrier)-SH + 2 reduced [2Fe-2S]-[ferredoxin] + 2 S-adenosyl-L-methionine = (sulfur carrier)-H + biotin + 2 5'-deoxyadenosine + 2 L-methionine + 2 oxidized [2Fe-2S]-[ferredoxin]. It participates in cofactor biosynthesis; biotin biosynthesis; biotin from 7,8-diaminononanoate: step 2/2. Its function is as follows. Catalyzes the conversion of dethiobiotin (DTB) to biotin by the insertion of a sulfur atom into dethiobiotin via a radical-based mechanism. The chain is Biotin synthase from Natronomonas pharaonis (strain ATCC 35678 / DSM 2160 / CIP 103997 / JCM 8858 / NBRC 14720 / NCIMB 2260 / Gabara) (Halobacterium pharaonis).